The following is a 504-amino-acid chain: UDP-N-acetylmuramoylalanine--D-glutamate ligase (504 aa).

129-135 (GTNGKTT) is a binding site for ATP.

The protein belongs to the MurCDEF family.

It localises to the cytoplasm. The enzyme catalyses UDP-N-acetyl-alpha-D-muramoyl-L-alanine + D-glutamate + ATP = UDP-N-acetyl-alpha-D-muramoyl-L-alanyl-D-glutamate + ADP + phosphate + H(+). It functions in the pathway cell wall biogenesis; peptidoglycan biosynthesis. Its function is as follows. Cell wall formation. Catalyzes the addition of glutamate to the nucleotide precursor UDP-N-acetylmuramoyl-L-alanine (UMA). This is UDP-N-acetylmuramoylalanine--D-glutamate ligase from Cupriavidus metallidurans (strain ATCC 43123 / DSM 2839 / NBRC 102507 / CH34) (Ralstonia metallidurans).